A 354-amino-acid polypeptide reads, in one-letter code: Bergaptol O-methyltransferase (354 aa).

Residue histidine 121 participates in bergaptol binding. S-adenosyl-L-homocysteine contacts are provided by serine 174, glycine 198, aspartate 221, and lysine 255. Bergaptol is bound at residue histidine 259. Residue histidine 259 is the Proton acceptor of the active site.

Belongs to the class I-like SAM-binding methyltransferase superfamily. Cation-independent O-methyltransferase family. COMT subfamily.

The catalysed reaction is a 5-hydroxyfurocoumarin + S-adenosyl-L-methionine = a 5-methoxyfurocoumarin + S-adenosyl-L-homocysteine + H(+). It catalyses the reaction bergaptol + S-adenosyl-L-methionine = bergapten + S-adenosyl-L-homocysteine. Inhibited by Cu(2+), Ni(2+) and Co(2+). The polypeptide is Bergaptol O-methyltransferase (Ammi majus (Bishop's weed)).